We begin with the raw amino-acid sequence, 302 residues long: UDP-N-acetylenolpyruvoylglucosamine reductase (302 aa).

The FAD-binding PCMH-type domain occupies 23-188; the sequence is KVGGNAEIFF…LKAVFKVNKG (166 aa). The active site involves arginine 168. The Proton donor role is filled by serine 217. The active site involves glutamate 287.

This sequence belongs to the MurB family. It depends on FAD as a cofactor.

It localises to the cytoplasm. The catalysed reaction is UDP-N-acetyl-alpha-D-muramate + NADP(+) = UDP-N-acetyl-3-O-(1-carboxyvinyl)-alpha-D-glucosamine + NADPH + H(+). The protein operates within cell wall biogenesis; peptidoglycan biosynthesis. Its function is as follows. Cell wall formation. This Rickettsia bellii (strain RML369-C) protein is UDP-N-acetylenolpyruvoylglucosamine reductase.